We begin with the raw amino-acid sequence, 128 residues long: 2-iminobutanoate/2-iminopropanoate deaminase (128 aa).

The protein belongs to the RutC family.

Its subcellular location is the cytoplasm. It carries out the reaction 2-iminobutanoate + H2O = 2-oxobutanoate + NH4(+). The enzyme catalyses 2-iminopropanoate + H2O = pyruvate + NH4(+). Catalyzes the hydrolytic deamination of enamine/imine intermediates that form during the course of normal metabolism. May facilitate the release of ammonia from these potentially toxic reactive metabolites, reducing their impact on cellular components. It may act on enamine/imine intermediates formed by several types of pyridoxal-5'-phosphate-dependent dehydratases including L-threonine dehydratase. Preferentially digests Leu and Met in cooperation with L-amino acid oxidase, but digests Phe poorly. In Dermatophagoides farinae (American house dust mite), this protein is 2-iminobutanoate/2-iminopropanoate deaminase.